Here is a 188-residue protein sequence, read N- to C-terminus: MSFTNTPERYGVISAAFHWLSAIIVYGMFALGLWMVTLSYYDGWYHKAPELHKSIGILLMMGLVIRVLWRVISPPPGPLPSYSPMTRLAARAGHLALYLLLFAIGISGYLISTADGKPISVFGWFDVPATLADAGAQADFAGALHFWLAWSVVVLSVMHGFMALKHHFIDKDDTLKRMLGKSSSDYGV.

Residues 1 to 15 (MSFTNTPERYGVISA) are Cytoplasmic-facing. A helical transmembrane segment spans residues 16-36 (AFHWLSAIIVYGMFALGLWMV). H18 and H52 together coordinate heme b. Residues 37-54 (TLSYYDGWYHKAPELHKS) lie on the Periplasmic side of the membrane. A helical transmembrane segment spans residues 55 to 75 (IGILLMMGLVIRVLWRVISPP). Over 76 to 91 (PGPLPSYSPMTRLAAR) the chain is Cytoplasmic. Residues 92 to 112 (AGHLALYLLLFAIGISGYLIS) traverse the membrane as a helical segment. The Periplasmic portion of the chain corresponds to 113 to 143 (TADGKPISVFGWFDVPATLADAGAQADFAGA). The helical transmembrane segment at 144-164 (LHFWLAWSVVVLSVMHGFMAL) threads the bilayer. Heme b is bound by residues H145 and H159. The Cytoplasmic portion of the chain corresponds to 165-188 (KHHFIDKDDTLKRMLGKSSSDYGV).

Belongs to the cytochrome b561 family. Heme b is required as a cofactor.

The protein resides in the cell inner membrane. The protein is Cytochrome b561 homolog 2 (yceJ) of Escherichia coli (strain K12).